A 1001-amino-acid chain; its full sequence is Transcription-repair-coupling factor (1001 aa).

The region spanning 499-658 is the Helicase ATP-binding domain; the sequence is DLSSHRVMDR…LSQIKGISSL (160 aa). 512-519 contributes to the ATP binding site; that stretch reads GDVGFGKT. Positions 611–614 match the DEEH box motif; the sequence is DEEH. A Helicase C-terminal domain is found at 679–835; that stretch reads LLKEIIYREL…SIAYHDLEIR (157 aa).

The protein in the N-terminal section; belongs to the UvrB family. This sequence in the C-terminal section; belongs to the helicase family. RecG subfamily.

The protein resides in the cytoplasm. Functionally, couples transcription and DNA repair by recognizing RNA polymerase (RNAP) stalled at DNA lesions. Mediates ATP-dependent release of RNAP and its truncated transcript from the DNA, and recruitment of nucleotide excision repair machinery to the damaged site. This Helicobacter pylori (strain J99 / ATCC 700824) (Campylobacter pylori J99) protein is Transcription-repair-coupling factor.